Reading from the N-terminus, the 195-residue chain is Imidazoleglycerol-phosphate dehydratase (195 aa).

Belongs to the imidazoleglycerol-phosphate dehydratase family.

It localises to the cytoplasm. The enzyme catalyses D-erythro-1-(imidazol-4-yl)glycerol 3-phosphate = 3-(imidazol-4-yl)-2-oxopropyl phosphate + H2O. The protein operates within amino-acid biosynthesis; L-histidine biosynthesis; L-histidine from 5-phospho-alpha-D-ribose 1-diphosphate: step 6/9. In Sphingopyxis alaskensis (strain DSM 13593 / LMG 18877 / RB2256) (Sphingomonas alaskensis), this protein is Imidazoleglycerol-phosphate dehydratase.